The chain runs to 354 residues: Peptide chain release factor 1 (354 aa).

N5-methylglutamine is present on glutamine 230.

It belongs to the prokaryotic/mitochondrial release factor family. Post-translationally, methylated by PrmC. Methylation increases the termination efficiency of RF1.

The protein localises to the cytoplasm. Peptide chain release factor 1 directs the termination of translation in response to the peptide chain termination codons UAG and UAA. The sequence is that of Peptide chain release factor 1 from Thermus thermophilus (strain ATCC BAA-163 / DSM 7039 / HB27).